Here is a 146-residue protein sequence, read N- to C-terminus: Cytochrome c-type biogenesis protein CcmE (146 aa).

Topologically, residues 1 to 8 (MNPRRKKR) are cytoplasmic. The chain crosses the membrane as a helical; Signal-anchor for type II membrane protein span at residues 9–29 (LGLILALVLGASATVGLMLYA). At 30-146 (LNQNMDLFYT…EVAEAMKKTH (117 aa)) the chain is on the periplasmic side. Positions 129 and 133 each coordinate heme.

The protein belongs to the CcmE/CycJ family.

The protein localises to the cell inner membrane. Heme chaperone required for the biogenesis of c-type cytochromes. Transiently binds heme delivered by CcmC and transfers the heme to apo-cytochromes in a process facilitated by CcmF and CcmH. This is Cytochrome c-type biogenesis protein CcmE from Aliivibrio salmonicida (strain LFI1238) (Vibrio salmonicida (strain LFI1238)).